The sequence spans 103 residues: MYAIFKINGVQYKAKSGSVVCLNKISGDIGSTIEIKKIMALFNDEKIIFGQPFIKNSRIIATIKKHINGKKISIVKFSRRKHFKKITGYRQKLTNIKIIDICC.

The protein belongs to the bacterial ribosomal protein bL21 family. Part of the 50S ribosomal subunit. Contacts protein L20.

Its function is as follows. This protein binds to 23S rRNA in the presence of protein L20. The polypeptide is Large ribosomal subunit protein bL21 (Wigglesworthia glossinidia brevipalpis).